The chain runs to 122 residues: Small ribosomal subunit protein bS6 (122 aa).

The tract at residues Ala95 to Ala122 is disordered.

The protein belongs to the bacterial ribosomal protein bS6 family.

Binds together with bS18 to 16S ribosomal RNA. The chain is Small ribosomal subunit protein bS6 from Ralstonia nicotianae (strain ATCC BAA-1114 / GMI1000) (Ralstonia solanacearum).